A 638-amino-acid chain; its full sequence is LEAF RUST 10 DISEASE-RESISTANCE LOCUS RECEPTOR-LIKE PROTEIN KINASE-like 2.1 (638 aa).

Residues 1–29 form the signal peptide; it reads MINLSLYQTNSLSYTIIWMLFVIPSCVLS. Over 30-264 the chain is Extracellular; the sequence is VDERQKHCSP…EHTCGKMGIG (235 aa). 5 N-linked (GlcNAc...) asparagine glycosylation sites follow: N69, N114, N136, N204, and N239. A helical membrane pass occupies residues 265–285; that stretch reads IGLGCGFLGATLITVCLLCFF. The Cytoplasmic segment spans residues 286–638; the sequence is FQKRRTSHHL…YTEVFIGSTS (353 aa). Residues 321 to 609 form the Protein kinase domain; it reads KLFSHTLGKG…VLEVPPKPSI (289 aa). ATP is bound by residues 327–335 and K349; that span reads LGKGGFGTV. Y393 bears the Phosphotyrosine mark. D444 (proton acceptor) is an active-site residue. Residue T484 is modified to Phosphothreonine.

This sequence belongs to the protein kinase superfamily. Ser/Thr protein kinase family.

The protein localises to the membrane. The enzyme catalyses L-seryl-[protein] + ATP = O-phospho-L-seryl-[protein] + ADP + H(+). The catalysed reaction is L-threonyl-[protein] + ATP = O-phospho-L-threonyl-[protein] + ADP + H(+). This chain is LEAF RUST 10 DISEASE-RESISTANCE LOCUS RECEPTOR-LIKE PROTEIN KINASE-like 2.1, found in Arabidopsis thaliana (Mouse-ear cress).